Here is a 470-residue protein sequence, read N- to C-terminus: Glutamate--tRNA ligase (470 aa).

The 'HIGH' region signature appears at 9-19; sequence PSPTGFLHVGG. The 'KMSKS' region motif lies at 236–240; the sequence is RLSKR. Lys239 lines the ATP pocket.

It belongs to the class-I aminoacyl-tRNA synthetase family. Glutamate--tRNA ligase type 1 subfamily. In terms of assembly, monomer.

The protein resides in the cytoplasm. It catalyses the reaction tRNA(Glu) + L-glutamate + ATP = L-glutamyl-tRNA(Glu) + AMP + diphosphate. Functionally, catalyzes the attachment of glutamate to tRNA(Glu) in a two-step reaction: glutamate is first activated by ATP to form Glu-AMP and then transferred to the acceptor end of tRNA(Glu). This is Glutamate--tRNA ligase from Legionella pneumophila subsp. pneumophila (strain Philadelphia 1 / ATCC 33152 / DSM 7513).